Reading from the N-terminus, the 360-residue chain is Glutamate 5-kinase (360 aa).

ATP is bound at residue Lys7. Substrate is bound by residues Ser47, Asp134, and Asn146. ATP contacts are provided by residues 166-167 (TD) and 210-216 (TGGISTK). One can recognise a PUA domain in the interval 275 to 356 (VGKITLDDGA…SSIIVVHRDV (82 aa)).

It belongs to the glutamate 5-kinase family.

Its subcellular location is the cytoplasm. The enzyme catalyses L-glutamate + ATP = L-glutamyl 5-phosphate + ADP. The protein operates within amino-acid biosynthesis; L-proline biosynthesis; L-glutamate 5-semialdehyde from L-glutamate: step 1/2. Functionally, catalyzes the transfer of a phosphate group to glutamate to form L-glutamate 5-phosphate. The polypeptide is Glutamate 5-kinase (Prochlorococcus marinus (strain AS9601)).